Consider the following 968-residue polypeptide: Translation initiation factor IF-2 (968 aa).

The segment covering P51–P76 has biased composition (low complexity). Positions P51–N369 are disordered. Positions A77 to A87 are enriched in pro residues. The span at E93–S102 shows a compositional bias: low complexity. A compositionally biased stretch (pro residues) spans A103–A112. Low complexity-rich tracts occupy residues A113–S122, A128–P170, and G239–R254. The segment covering G281–R336 has biased composition (gly residues). Residues G337–K346 are compositionally biased toward basic residues. The tr-type G domain occupies A461–L632. Residues G470–T477 are G1. GTP is bound at residue G470–T477. The G2 stretch occupies residues G495–H499. The G3 stretch occupies residues D520–G523. GTP-binding positions include D520–H524 and N574–D577. The G4 stretch occupies residues N574–D577. The segment at S610 to R612 is G5.

This sequence belongs to the TRAFAC class translation factor GTPase superfamily. Classic translation factor GTPase family. IF-2 subfamily.

The protein localises to the cytoplasm. One of the essential components for the initiation of protein synthesis. Protects formylmethionyl-tRNA from spontaneous hydrolysis and promotes its binding to the 30S ribosomal subunits. Also involved in the hydrolysis of GTP during the formation of the 70S ribosomal complex. In Arthrobacter sp. (strain FB24), this protein is Translation initiation factor IF-2.